Reading from the N-terminus, the 226-residue chain is MAKISKRFKEALSKVEKNKVYPLTQALDLAKQTSTTKFDSTVEVAFNLNIDPRKADQQIRGAVVLPAGTGKTQRVLVLTNTKTKEAEQAKADIVGGEELINRIKNENWFDFDIIVATPEMMAKLGAIGKILGPKGLMPNPKTGTVTIDVAKAVDDIKKRKVEYRADKEGNIHLIIGKVSFEIEKLEENFKAVIDEIRRVKPQTVKGDYIKNITLSTTMGPGIKVQF.

Belongs to the universal ribosomal protein uL1 family. In terms of assembly, part of the 50S ribosomal subunit.

Functionally, binds directly to 23S rRNA. The L1 stalk is quite mobile in the ribosome, and is involved in E site tRNA release. Its function is as follows. Protein L1 is also a translational repressor protein, it controls the translation of the L11 operon by binding to its mRNA. In Mycoplasma mycoides subsp. mycoides SC (strain CCUG 32753 / NCTC 10114 / PG1), this protein is Large ribosomal subunit protein uL1.